Here is a 243-residue protein sequence, read N- to C-terminus: Uroporphyrinogen-III C-methyltransferase (243 aa).

Residues Pro12, 88–90, 118–119, Met166, and Ala195 contribute to the S-adenosyl-L-homocysteine site; these read SGD and ST.

It belongs to the precorrin methyltransferase family.

The catalysed reaction is uroporphyrinogen III + 2 S-adenosyl-L-methionine = precorrin-2 + 2 S-adenosyl-L-homocysteine + H(+). Its pathway is cofactor biosynthesis; adenosylcobalamin biosynthesis; precorrin-2 from uroporphyrinogen III: step 1/1. It functions in the pathway porphyrin-containing compound metabolism; siroheme biosynthesis; precorrin-2 from uroporphyrinogen III: step 1/1. Functionally, catalyzes the two successive C-2 and C-7 methylation reactions involved in the conversion of uroporphyrinogen III to precorrin-2 via the intermediate formation of precorrin-1. It is a step in the biosynthesis of both cobalamin (vitamin B12) and siroheme. This is Uroporphyrinogen-III C-methyltransferase from Synechococcus elongatus (strain ATCC 33912 / PCC 7942 / FACHB-805) (Anacystis nidulans R2).